The sequence spans 339 residues: Photosystem II assembly lipoprotein Ycf48 (339 aa).

A signal peptide spans 1–22 (MVIVKSWQKIFALLVVLLLCIG). A lipid anchor (N-palmitoyl cysteine) is attached at Cys-23. The S-diacylglycerol cysteine moiety is linked to residue Cys-23.

It belongs to the Ycf48 family. Part of early PSII assembly complexes which includes D1 (psbA) and PsbI; not found in mature PSII. Binds to the lumenal side of PSII complexes. Interacts with YidC.

Its subcellular location is the cellular thylakoid membrane. Functionally, a factor required for optimal assembly of photosystem II (PSII), acting in the early stages of PSII assembly. Also plays a role in replacement of photodamaged D1 (psbA). Assists YidC in synthesis of chlorophyll-binding proteins. This Trichormus variabilis (strain ATCC 29413 / PCC 7937) (Anabaena variabilis) protein is Photosystem II assembly lipoprotein Ycf48.